The chain runs to 376 residues: Erythronate-4-phosphate dehydrogenase (376 aa).

2 residues coordinate substrate: Ser45 and Thr67. Position 147 (Asp147) interacts with NAD(+). Arg209 is a catalytic residue. Asp233 contributes to the NAD(+) binding site. Glu238 is an active-site residue. Residue His255 is the Proton donor of the active site. Gly258 is an NAD(+) binding site. A substrate-binding site is contributed by Tyr259.

It belongs to the D-isomer specific 2-hydroxyacid dehydrogenase family. PdxB subfamily. As to quaternary structure, homodimer.

The protein localises to the cytoplasm. It catalyses the reaction 4-phospho-D-erythronate + NAD(+) = (R)-3-hydroxy-2-oxo-4-phosphooxybutanoate + NADH + H(+). The protein operates within cofactor biosynthesis; pyridoxine 5'-phosphate biosynthesis; pyridoxine 5'-phosphate from D-erythrose 4-phosphate: step 2/5. Functionally, catalyzes the oxidation of erythronate-4-phosphate to 3-hydroxy-2-oxo-4-phosphonooxybutanoate. This Shewanella sp. (strain ANA-3) protein is Erythronate-4-phosphate dehydrogenase.